The primary structure comprises 276 residues: Orotidine 5'-phosphate decarboxylase (276 aa).

Catalysis depends on lysine 96, which acts as the Proton donor.

It belongs to the OMP decarboxylase family. Type 2 subfamily.

The enzyme catalyses orotidine 5'-phosphate + H(+) = UMP + CO2. It functions in the pathway pyrimidine metabolism; UMP biosynthesis via de novo pathway; UMP from orotate: step 2/2. In Porphyromonas gingivalis (strain ATCC 33277 / DSM 20709 / CIP 103683 / JCM 12257 / NCTC 11834 / 2561), this protein is Orotidine 5'-phosphate decarboxylase.